The primary structure comprises 204 residues: Pneumococcal vaccine antigen A (204 aa).

The protein resides in the cell surface. This Streptococcus pneumoniae serotype 4 (strain ATCC BAA-334 / TIGR4) protein is Pneumococcal vaccine antigen A (pvaA).